The sequence spans 114 residues: Probable 4-amino-4-deoxy-L-arabinose-phosphoundecaprenol flippase subunit ArnE (114 aa).

Transmembrane regions (helical) follow at residues 41–61, 64–84, and 94–114; these read PWLI…IYLL, LPLS…LVGS, and YHNW…GGLL. The region spanning 43–112 is the EamA domain; sequence LIASVAALGC…IIVGALLLGG (70 aa).

The protein belongs to the ArnE family. Heterodimer of ArnE and ArnF.

It is found in the cell inner membrane. It functions in the pathway bacterial outer membrane biogenesis; lipopolysaccharide biosynthesis. Its function is as follows. Translocates 4-amino-4-deoxy-L-arabinose-phosphoundecaprenol (alpha-L-Ara4N-phosphoundecaprenol) from the cytoplasmic to the periplasmic side of the inner membrane. This Aeromonas hydrophila subsp. hydrophila (strain ATCC 7966 / DSM 30187 / BCRC 13018 / CCUG 14551 / JCM 1027 / KCTC 2358 / NCIMB 9240 / NCTC 8049) protein is Probable 4-amino-4-deoxy-L-arabinose-phosphoundecaprenol flippase subunit ArnE.